The chain runs to 338 residues: RNA 3'-terminal phosphate cyclase (338 aa).

Residues Q103 and 283–287 each bind ATP; that span reads YLADQ. The active-site Tele-AMP-histidine intermediate is the H308.

Belongs to the RNA 3'-terminal cyclase family. Type 1 subfamily.

The protein localises to the cytoplasm. It carries out the reaction a 3'-end 3'-phospho-ribonucleotide-RNA + ATP = a 3'-end 2',3'-cyclophospho-ribonucleotide-RNA + AMP + diphosphate. In terms of biological role, catalyzes the conversion of 3'-phosphate to a 2',3'-cyclic phosphodiester at the end of RNA. The mechanism of action of the enzyme occurs in 3 steps: (A) adenylation of the enzyme by ATP; (B) transfer of adenylate to an RNA-N3'P to produce RNA-N3'PP5'A; (C) and attack of the adjacent 2'-hydroxyl on the 3'-phosphorus in the diester linkage to produce the cyclic end product. The biological role of this enzyme is unknown but it is likely to function in some aspects of cellular RNA processing. This is RNA 3'-terminal phosphate cyclase from Shigella sonnei (strain Ss046).